The chain runs to 91 residues: Mercuric transport protein periplasmic component (91 aa).

The signal sequence occupies residues 1-19; that stretch reads MKKLLSALALAAVVAPVWA. Residues 22 to 88 form the HMA domain; sequence QTVTLSVPGM…ATEDAGYPSS (67 aa). Residues Cys-33 and Cys-36 each coordinate Hg(2+).

This sequence belongs to the MerP family. As to quaternary structure, monomer.

The protein localises to the periplasm. In terms of biological role, involved in mercury resistance. Acts as a mercury scavenger that specifically binds to a mercuric ion in the periplasm and probably passes it to the cytoplasmic mercuric reductase MerA via the mercuric transport protein MerT. The sequence is that of Mercuric transport protein periplasmic component from Pseudomonas fluorescens.